Consider the following 398-residue polypeptide: Probable peptidoglycan glycosyltransferase FtsW (398 aa).

Topologically, residues 1–25 (MCYGGTAMMAFADIKEALTPKPSAQ) are cytoplasmic. Residues 26 to 46 (LYDVPLLYCMLMLMGVGFVMV) form a helical membrane-spanning segment. Residues 47–69 (TSASMPTADRLFGNIYHFTIRHG) are Periplasmic-facing. Residues 70–90 (IFLALSFCLFWITTSVPMSWW) form a helical membrane-spanning segment. Residue Lys91 is a topological domain, cytoplasmic. The chain crosses the membrane as a helical span at residues 92–112 (KANPYLLLVGLGLLLIVLIVG). Topologically, residues 113-120 (REVNGSTR) are periplasmic. Residues 121–141 (WIPIGPFNIQASELAKLFFFS) form a helical membrane-spanning segment. The Cytoplasmic segment spans residues 142–156 (YISGYLVRKRSEVQE). Residues 157–177 (NIKGFIKPILVFAAYAGLILM) form a helical membrane-spanning segment. Over 178–179 (QP) the chain is Periplasmic. A helical transmembrane segment spans residues 180–200 (DLGTVVVMFVTTVGLLFLAGA). Residue Lys201 is a topological domain, cytoplasmic. The chain crosses the membrane as a helical span at residues 202–222 (LWQFFVLILTGVALVIGLIVL). At 223–289 (EPYRMARVIG…DFIFAVIAEE (67 aa)) the chain is on the periplasmic side. A helical membrane pass occupies residues 290–312 (LGFVGVSSILIVLGTLVFRALLI). The Cytoplasmic segment spans residues 313–324 (GQNALKNGKEYE). The helical transmembrane segment at 325 to 345 (GYLALAIGIWFAFQTMVNVGA) threads the bilayer. Residues 346–356 (SAGILPTKGLT) lie on the Periplasmic side of the membrane. The chain crosses the membrane as a helical span at residues 357–377 (LPFISYGGSSLLMMTIAAGIL). The Cytoplasmic segment spans residues 378-398 (LRVDFETKMATKQATSGGAKR).

The protein belongs to the SEDS family. FtsW subfamily.

It localises to the cell inner membrane. It catalyses the reaction [GlcNAc-(1-&gt;4)-Mur2Ac(oyl-L-Ala-gamma-D-Glu-L-Lys-D-Ala-D-Ala)](n)-di-trans,octa-cis-undecaprenyl diphosphate + beta-D-GlcNAc-(1-&gt;4)-Mur2Ac(oyl-L-Ala-gamma-D-Glu-L-Lys-D-Ala-D-Ala)-di-trans,octa-cis-undecaprenyl diphosphate = [GlcNAc-(1-&gt;4)-Mur2Ac(oyl-L-Ala-gamma-D-Glu-L-Lys-D-Ala-D-Ala)](n+1)-di-trans,octa-cis-undecaprenyl diphosphate + di-trans,octa-cis-undecaprenyl diphosphate + H(+). It participates in cell wall biogenesis; peptidoglycan biosynthesis. Functionally, peptidoglycan polymerase that is essential for cell division. The chain is Probable peptidoglycan glycosyltransferase FtsW from Pseudoalteromonas translucida (strain TAC 125).